Reading from the N-terminus, the 386-residue chain is Methylthioribose-1-phosphate isomerase (386 aa).

Catalysis depends on aspartate 261, which acts as the Proton donor.

The protein belongs to the eIF-2B alpha/beta/delta subunits family. MtnA subfamily.

Its subcellular location is the cytoplasm. The protein resides in the nucleus. It catalyses the reaction 5-(methylsulfanyl)-alpha-D-ribose 1-phosphate = 5-(methylsulfanyl)-D-ribulose 1-phosphate. It functions in the pathway amino-acid biosynthesis; L-methionine biosynthesis via salvage pathway; L-methionine from S-methyl-5-thio-alpha-D-ribose 1-phosphate: step 1/6. Catalyzes the interconversion of methylthioribose-1-phosphate (MTR-1-P) into methylthioribulose-1-phosphate (MTRu-1-P). This is Methylthioribose-1-phosphate isomerase from Paracoccidioides brasiliensis (strain Pb03).